A 107-amino-acid polypeptide reads, in one-letter code: Phosphoribosyl-ATP pyrophosphatase (107 aa).

Belongs to the PRA-PH family.

It localises to the cytoplasm. It carries out the reaction 1-(5-phospho-beta-D-ribosyl)-ATP + H2O = 1-(5-phospho-beta-D-ribosyl)-5'-AMP + diphosphate + H(+). Its pathway is amino-acid biosynthesis; L-histidine biosynthesis; L-histidine from 5-phospho-alpha-D-ribose 1-diphosphate: step 2/9. The sequence is that of Phosphoribosyl-ATP pyrophosphatase from Zymomonas mobilis subsp. mobilis (strain ATCC 31821 / ZM4 / CP4).